We begin with the raw amino-acid sequence, 182 residues long: Lipoprotein signal peptidase (182 aa).

3 helical membrane passes run 12 to 32 (VAVFACVAAAALIVDQLTKAW), 68 to 88 (ATWVISLLAVVACVALAVAGV), and 91 to 111 (VSMKWSVAISFAFAGALGNLI). Residues Asp-127 and Asp-140 contribute to the active site. The helical transmembrane segment at 135–155 (VGNVADIYLVVAGVVLVILIL) threads the bilayer.

This sequence belongs to the peptidase A8 family.

It is found in the cell membrane. It catalyses the reaction Release of signal peptides from bacterial membrane prolipoproteins. Hydrolyzes -Xaa-Yaa-Zaa-|-(S,diacylglyceryl)Cys-, in which Xaa is hydrophobic (preferably Leu), and Yaa (Ala or Ser) and Zaa (Gly or Ala) have small, neutral side chains.. Its pathway is protein modification; lipoprotein biosynthesis (signal peptide cleavage). In terms of biological role, this protein specifically catalyzes the removal of signal peptides from prolipoproteins. The chain is Lipoprotein signal peptidase from Bifidobacterium longum (strain DJO10A).